We begin with the raw amino-acid sequence, 331 residues long: Cytochrome bo(3) ubiquinol oxidase subunit 2 (331 aa).

The first 23 residues, 1-23 (MTKANPFAALKWLSLAPALLLGG), serve as a signal peptide directing secretion. C24 carries the N-palmitoyl cysteine lipid modification. Residue C24 is the site of S-diacylglycerol cysteine attachment. Residues 24 to 41 (CDMTLFNPKGQVGMDERT) are Periplasmic-facing. A helical transmembrane segment spans residues 42-62 (LIITATLLMLIVVIPVIVMTL). Residues 63 to 86 (AFAWKYRASNTQAEYKPDWHHSNR) lie on the Cytoplasmic side of the membrane. A helical membrane pass occupies residues 87–107 (IEAVVWLVPCVIIAILGWITW). Over 108–331 (ESTHKLDPYR…DMHMQPSTQE (224 aa)) the chain is Periplasmic.

This sequence belongs to the cytochrome c oxidase subunit 2 family. In terms of assembly, heterooctamer of two A chains, two B chains, two C chains and two D chains.

The protein resides in the cell inner membrane. Its function is as follows. Cytochrome bo(3) ubiquinol terminal oxidase is the component of the aerobic respiratory chain of E.coli that predominates when cells are grown at high aeration. Has proton pump activity across the membrane in addition to electron transfer, pumping 2 protons/electron. The protein is Cytochrome bo(3) ubiquinol oxidase subunit 2 (cyoA) of Pseudomonas aeruginosa (strain ATCC 15692 / DSM 22644 / CIP 104116 / JCM 14847 / LMG 12228 / 1C / PRS 101 / PAO1).